Consider the following 116-residue polypeptide: Flagellar transcriptional regulator FlhD (116 aa).

The protein belongs to the FlhD family. In terms of assembly, homodimer; disulfide-linked. Forms a heterohexamer composed of two FlhC and four FlhD subunits. Each FlhC binds a FlhD dimer, forming a heterotrimer, and a hexamer assembles by dimerization of two heterotrimers.

The protein localises to the cytoplasm. Functionally, functions in complex with FlhC as a master transcriptional regulator that regulates transcription of several flagellar and non-flagellar operons by binding to their promoter region. Activates expression of class 2 flagellar genes, including fliA, which is a flagellum-specific sigma factor that turns on the class 3 genes. Also regulates genes whose products function in a variety of physiological pathways. The polypeptide is Flagellar transcriptional regulator FlhD (Enterobacter sp. (strain 22)).